The sequence spans 556 residues: Jerky protein homolog (556 aa).

One can recognise an HTH psq-type domain in the interval 11 to 62 (RGEKRKRVVLTLKEKIDICTRLEKGESRKALMQEYNVGMSTLYDIRAHKAQL). 2 consecutive DNA-binding regions (H-T-H motif) follow at residues 38-58 (RKALMQEYNVGMSTLYDIRAH) and 110-142 (PMLIEKAKDFYEQMQLTEPCVFSGGWLWRFKAR). The region spanning 77 to 149 (QRRTLHTPKL…KARHGIKKLD (73 aa)) is the HTH CENPB-type domain. The DDE-1 domain occupies 213 to 382 (KDRLTVLMCA…VPSHVFRRAW (170 aa)). Ser-414 carries the phosphoserine modification. The interval 439-482 (SWGVAGREAEGGRPPAATSPAEVVWSSEKTPKADQDGRGDPGEG) is disordered. A compositionally biased stretch (basic and acidic residues) spans 467-479 (KTPKADQDGRGDP).

Belongs to the tigger transposable element derived protein family. As to expression, expressed ubiquitously.

The protein localises to the nucleus. May bind DNA. The protein is Jerky protein homolog of Homo sapiens (Human).